The following is a 148-amino-acid chain: Augurin (148 aa).

An N-terminal signal peptide occupies residues Met1–Gly31. 2 consecutive propeptides follow at residues Asn32–Ala68 and Ser133–Tyr148.

It belongs to the augurin family. In terms of tissue distribution, expressed in the brain, with expression in the choroid plexus and the ventricular ependymal cells (at protein level).

It localises to the secreted. Its subcellular location is the cytoplasm. The protein resides in the apical cell membrane. In terms of biological role, probable hormone that may attenuate cell proliferation and induce senescence of oligodendrocyte and neural precursor cells in the central nervous system. ECRG4-induced senescence is characterized by G1 arrest, RB1 dephosphorylation and accelerated CCND1 and CCND3 proteasomal degradation. The protein is Augurin of Rattus norvegicus (Rat).